The following is a 297-amino-acid chain: Small ribosomal subunit biogenesis GTPase RsgA (297 aa).

A CP-type G domain is found at 65–223; sequence INEIGRPAVA…IADTPGFSAI (159 aa). GTP-binding positions include 114-117 and 166-174; these read SKSD and GQSGAGKST. Cys-247, Cys-252, His-254, and Cys-260 together coordinate Zn(2+).

This sequence belongs to the TRAFAC class YlqF/YawG GTPase family. RsgA subfamily. As to quaternary structure, monomer. Associates with 30S ribosomal subunit, binds 16S rRNA. Zn(2+) serves as cofactor.

The protein localises to the cytoplasm. Functionally, one of several proteins that assist in the late maturation steps of the functional core of the 30S ribosomal subunit. Helps release RbfA from mature subunits. May play a role in the assembly of ribosomal proteins into the subunit. Circularly permuted GTPase that catalyzes slow GTP hydrolysis, GTPase activity is stimulated by the 30S ribosomal subunit. This Lactobacillus johnsonii (strain CNCM I-12250 / La1 / NCC 533) protein is Small ribosomal subunit biogenesis GTPase RsgA.